Reading from the N-terminus, the 729-residue chain is MATVSTGSLIFIVKKNSPMMSKLVFFWQNREKEFRDFGGFSEKSVYFCDTIDNRKRLILVVINREVLLMTFDAIDQLAVNTVRTLSMDAIQAANSGHPGLPMGAAPMAYVLWNHFMNINPKTSRNWSNRDRFILSAGHGSAMLYSLLHLAGYDLSVEDLKNFRQWGSKTPGHPEVNHTDGVEATTGPLGQGIANAVGMAMAEAHLAAKFNKPGFDIVDHYTFALNGDGDLMEGVSQEAASMAGHLKLGKLVLLYDSNDISLDGPTSMAFTEDVKGRFEAYGWQHILVKDGNDLEEIAAAIEAAKAETEKPTIIEVKTIIGFGAEKQGTSAVHGAPLGAEGIAFAKKAYQWTHQDFEVPAEVTERFAQGLQARGEKAEQAWNDLFAAYQAEYPELAAEYQKAFANEAAQVELEAHELGSSMASRVSSQQAIQQISEQVASFWGGSADLSASNNTMVKAETDFQPGHYEGRNIWFGVREFAMAAAMNGIALHGGTRVYGGTFFVFSNYLLPAVRMAALQNLPTVYVMTHDSIAVGEDGPTHEPIEQLASVRSMPNLNVIRPADGNETNAAWKRAIAETDRPTMLVLTRQNLPVLEGTKELAEDGLNKGAYILSEAKGDLDGIIIATGSEVKLAMDTQEALEAEGIHVRVVSMPSQNIFDEQSAEYKESILPAAVTKRLAIEAGSSFGWAKYVGLAGKTLTIDTWGASAPGNRIFEEYGFTVANATELYKSL.

His-97 is a binding site for substrate. Residues His-138 and 186-188 (GPL) contribute to the thiamine diphosphate site. Asp-227 is a binding site for Mg(2+). Gly-228 and Asn-257 together coordinate thiamine diphosphate. Mg(2+) contacts are provided by Asn-257 and Ile-259. Substrate contacts are provided by His-332, Arg-423, and Ser-450. His-332 lines the thiamine diphosphate pocket. Residue Glu-477 is the Proton donor of the active site. Phe-503 lines the thiamine diphosphate pocket. The substrate site is built by His-527, Asp-535, and Arg-586.

It belongs to the transketolase family. In terms of assembly, homodimer. It depends on Mg(2+) as a cofactor. Ca(2+) is required as a cofactor. Mn(2+) serves as cofactor. The cofactor is Co(2+). Requires thiamine diphosphate as cofactor.

It catalyses the reaction D-sedoheptulose 7-phosphate + D-glyceraldehyde 3-phosphate = aldehydo-D-ribose 5-phosphate + D-xylulose 5-phosphate. In terms of biological role, catalyzes the transfer of a two-carbon ketol group from a ketose donor to an aldose acceptor, via a covalent intermediate with the cofactor thiamine pyrophosphate. This chain is Transketolase (tkt), found in Streptococcus pyogenes serotype M18 (strain MGAS8232).